Here is a 1084-residue protein sequence, read N- to C-terminus: MKVIKKRFFKPKEETLPSDEVPDPQSSAEPLHSLFVPDESEEEETTTSPKTNFEKDIIAIVGDISPIIMKYLYAKYSQKRNGAKFAVTELLTNPPDVEKLQQDSIASQSAKRPHTIVSYQEPPNKKVNINPDSASSNNEPLMWQRLIGSLNIQAMATXPDHETVEIPGKXKLKRITTKNSTMANSAIVRVYHNEREIGRIPEDWTRILSPLFDLNIAVFEASVLEETKSRLSTGDSFVIEIEVYLTNSSFAKNLDATENPIDLKKSNFDYSKESESEAALRLRQFAISNLFDRLAIKPLKVNDDTEDEEDISSQEINSGDVEHPVPEINLDQMKEFYQSNNQLKILEGLPETTTPPKENFALDLRSYQKHGLSWMLAREKELDVLEMLSNEDKLSSQSRKELENLGTMNPLWRKYKWPYATEATQDPTQNQTEKYFYANMYNGELSLEKPVIKSSLRGGILADEMGLGKTIATLALVNSVPYDNFPEPKSDRPYASQTTLIVVPMSLLFQWKSEFEKCNNNSRHVCRLHYGEDQETNLAWSLCNPDNSKIPIVMITTYGTVLNEFTRLSKRRNSKGELPKVGLYSVKFFRIILDEGHNIRNRNTKTAKSVYELQSSRKWILTGTPIVNRLDDLYSLTKFLELDPWNNFSYWKTFVTLPFEQKKISQTLDVVKSILEPIFLRRTKSQKKNGKPLVELPAKEVVIEQIKFNDDEEKLYQWFKDRAYASFAEGIKSGQLLRRYTQILTHILRLRQVCCHVDLIGGAHEMDDEIIEAEQDEDMRKFLTSIKENQIRFANDTDVKEKMYNLYGKIKEENECSICTQVPIPYSEMVVTPCAHTFCLSCILEHLDFQKELKKEKLCPNCRSPISKYQLFRIRNQPTKGNEIRFHIQKDAPDYSFQLYLYDPNRSSSKIQALVRHLKALHSQSPNSKVIVFSQFSSYLDIIQSELKLASEEFIVFKFDGRLNMNDRTKLLESFNQPLEDGKVAILLLSLKAGGVGLNLTTASRAYMMDPWWSPSIEDQAIDRIHRIGQNETVKVVRFIMENSIETKMLKIQERKKQIGEAVAAEEEERRKRRIEEIQILFEE.

The interval 11 to 51 is disordered; the sequence is PKEETLPSDEVPDPQSSAEPLHSLFVPDESEEEETTTSPKT. The region spanning 450–643 is the Helicase ATP-binding domain; sequence PVIKSSLRGG…YSLTKFLELD (194 aa). 463-470 is a binding site for ATP; that stretch reads DEMGLGKT. Positions 594 to 597 match the DEGH box motif; the sequence is DEGH. The RING-type zinc-finger motif lies at 816–863; that stretch reads CSICTQVPIPYSEMVVTPCAHTFCLSCILEHLDFQKELKKEKLCPNCR. The region spanning 913–1071 is the Helicase C-terminal domain; the sequence is ALVRHLKALH…AVAAEEEERR (159 aa).

This sequence belongs to the SNF2/RAD54 helicase family.

Its subcellular location is the cytoplasm. The protein resides in the nucleus. Probable helicase, member of the UBC2/RAD6 epistasis group. Functions with DNA repair protein RAD18 in error-free postreplication DNA repair. Involved in the maintenance of wild-type rates of instability of simple repetitive sequences such as poly(GT) repeats. Seems to be involved in maintaining a balance which acts in favor of error-prone non-homologous joining during DNA double-strand breaks repairs. The protein is DNA repair protein RAD5 (RAD5) of Candida albicans (strain SC5314 / ATCC MYA-2876) (Yeast).